A 418-amino-acid chain; its full sequence is F-box/LRR-repeat protein 14 (418 aa).

Residues 2 to 48 (ETHISCLFPELLAMIFGYLDVRDKGRAAQVCTAWRDAAYHKSVWRGV) form the F-box domain. The tract at residues 2 to 48 (ETHISCLFPELLAMIFGYLDVRDKGRAAQVCTAWRDAAYHKSVWRGV) is required for down-regulation of SNAI1. 5 LRR repeats span residues 144–163 (GLEVLELGGCSNITNTGLLL), 170–191 (RLKSLNLRSCRHLSDVGIGHLA), 203–225 (GLEQLTLQDCQKLTDLSLKHISR), 229–250 (GLRLLNLSFCGGISDAGLLHLS), and 254–275 (SLRSLNLRSCDNISDTGIMHLA).

As to quaternary structure, part of a SCF (SKP1-cullin-F-box) ubiquitin-protein ligase complex. Interacts with SKP1 and CUL1. Interacts with SNAI1; the interaction requires the phosphorylation of the two serine residues in the substrate destruction motif D-S-G-X(2,3,4)-S.

The protein localises to the cytoplasm. Functionally, substrate-recognition component of some SCF (SKP1-CUL1-F-box protein)-type E3 ubiquitin-protein ligase complexes. The SCF(FBXL14) complex acts by mediating ubiquitination and subsequent degradation of SNAI1. In Homo sapiens (Human), this protein is F-box/LRR-repeat protein 14 (FBXL14).